Here is a 426-residue protein sequence, read N- to C-terminus: Mothers against decapentaplegic homolog 7 (426 aa).

The disordered stretch occupies residues 13 to 55 (LWRSRAPGGEDEEEGAGGGGGGGELRGEGATDSRAHGAGGGGP). A compositionally biased stretch (basic and acidic residues) spans 37–47 (LRGEGATDSRA). N6-acetyllysine; alternate occurs at positions 64 and 70. Residues Lys64 and Lys70 each participate in a glycyl lysine isopeptide (Lys-Gly) (interchain with G-Cter in ubiquitin); alternate cross-link. The 144-residue stretch at 64–207 (KAVRGAKGHH…LSRLCELESP (144 aa)) folds into the MH1 domain. The Zn(2+) site is built by Cys125, Cys180, Cys192, and His197. A PY-motif motif is present at residues 208–211 (PPPY). Residues 208-217 (PPPYSRYPMD) form an important for interaction with SMURF2 region. A Phosphoserine modification is found at Ser249. Positions 261 to 426 (WCVVAYWEEK…CWLEVIFNSR (166 aa)) constitute an MH2 domain.

The protein belongs to the dwarfin/SMAD family. As to quaternary structure, interacts with WWP1. Interacts with COPS5. Interacts with NEDD4L. Interacts with STAMBP. Interacts with RNF111, AXIN1 and AXIN2. Interacts with PPP1R15A. Interacts (via MH2 domain) with EP300. Interacts with ACVR1B, SMURF1, SMURF2 and TGFBR1; SMAD7 recruits SMURF1 and SMURF2 to the TGF-beta receptor and regulates its degradation. Interacts with PDPK1 (via PH domain). Interacts with TSC22D1/TSC-22; the interaction requires TGF-beta and the interaction is inhibited by TGFBR1. In terms of processing, phosphorylation on Ser-249 does not affect its stability, nuclear localization or inhibitory function in TGFB signaling; however it affects its ability to regulate transcription. Phosphorylated by PDPK1. Post-translationally, ubiquitinated by WWP1. Polyubiquitinated by RNF111, which is enhanced by AXIN1 and promotes proteasomal degradation. In response to TGF-beta, ubiquitinated by SMURF1; which promotes its degradation. Acetylation prevents ubiquitination and degradation mediated by SMURF1. Ubiquitous with higher expression in the lung and vascular endothelium.

The protein resides in the nucleus. It is found in the cytoplasm. In terms of biological role, antagonist of signaling by TGF-beta (transforming growth factor) type 1 receptor superfamily members; has been shown to inhibit TGF-beta (Transforming growth factor) and activin signaling by associating with their receptors thus preventing SMAD2 access. Functions as an adapter to recruit SMURF2 to the TGF-beta receptor complex. Also acts by recruiting the PPP1R15A-PP1 complex to TGFBR1, which promotes its dephosphorylation. Positively regulates PDPK1 kinase activity by stimulating its dissociation from the 14-3-3 protein YWHAQ which acts as a negative regulator. This chain is Mothers against decapentaplegic homolog 7 (SMAD7), found in Homo sapiens (Human).